A 215-amino-acid polypeptide reads, in one-letter code: Thymidylate kinase (215 aa).

G11–S18 is a binding site for ATP.

The protein belongs to the thymidylate kinase family.

The enzyme catalyses dTMP + ATP = dTDP + ADP. In terms of biological role, phosphorylation of dTMP to form dTDP in both de novo and salvage pathways of dTTP synthesis. This chain is Thymidylate kinase, found in Nitrosomonas europaea (strain ATCC 19718 / CIP 103999 / KCTC 2705 / NBRC 14298).